The chain runs to 329 residues: GTPase Obg (329 aa).

In terms of domain architecture, Obg spans 1–159; that stretch reads MQFIDQARIS…WPLQLELKLL (159 aa). Positions 160–328 constitute an OBG-type G domain; sequence AEVGIIGLPN…MLDRVWSELG (169 aa). ATP is bound by residues 166–173, 191–195, 213–216, 280–283, and 309–311; these read GLPNAGKS, FTTLI, DIPG, NKQE, and SAA. Positions 173 and 193 each coordinate Mg(2+).

It belongs to the TRAFAC class OBG-HflX-like GTPase superfamily. OBG GTPase family. As to quaternary structure, monomer. It depends on Mg(2+) as a cofactor.

It is found in the cytoplasm. Its function is as follows. An essential GTPase which binds GTP, GDP and possibly (p)ppGpp with moderate affinity, with high nucleotide exchange rates and a fairly low GTP hydrolysis rate. Plays a role in control of the cell cycle, stress response, ribosome biogenesis and in those bacteria that undergo differentiation, in morphogenesis control. The protein is GTPase Obg of Synechococcus sp. (strain CC9311).